Consider the following 141-residue polypeptide: ATP synthase F(0) complex subunit C2, mitochondrial (141 aa).

The transit peptide at 1–66 (MFSCFKFIST…RNFQTSAISR (66 aa)) directs the protein to the mitochondrion. Residues 82–102 (VGVAGSGAGIGTVFGSLIIGY) traverse the membrane as a helical segment. Residue Lys-109 is modified to N6,N6,N6-trimethyllysine. Residues 117–137 (ILGFALSEAMGLFCLMVAFLI) traverse the membrane as a helical segment.

This sequence belongs to the ATPase C chain family. In terms of assembly, F-type ATPases have 2 components, CF(1) - the catalytic core - and CF(0) - the membrane proton channel. CF(1) has five subunits: alpha(3), beta(3), gamma(1), delta(1), epsilon(1). CF(0) has three main subunits: a, b and c. Interacts with DNAJC30; interaction is direct. Trimethylated by ATPSCKMT at Lys-109. Methylation is required for proper incorporation of the C subunit into the ATP synthase complex and mitochondrial respiration.

It localises to the mitochondrion membrane. Functionally, mitochondrial membrane ATP synthase (F(1)F(0) ATP synthase or Complex V) produces ATP from ADP in the presence of a proton gradient across the membrane which is generated by electron transport complexes of the respiratory chain. F-type ATPases consist of two structural domains, F(1) - containing the extramembraneous catalytic core and F(0) - containing the membrane proton channel, linked together by a central stalk and a peripheral stalk. During catalysis, ATP synthesis in the catalytic domain of F(1) is coupled via a rotary mechanism of the central stalk subunits to proton translocation. Part of the complex F(0) domain. A homomeric c-ring of probably 10 subunits is part of the complex rotary element. The sequence is that of ATP synthase F(0) complex subunit C2, mitochondrial from Pongo abelii (Sumatran orangutan).